The following is a 1052-amino-acid chain: Protein HelA (1052 aa).

The next 13 helical transmembrane spans lie at 14–34 (WFVL…FQRL), 121–141 (LPPG…EIFM), 348–368 (GALL…AALI), 369–389 (TAMV…ENQI), 393–413 (LMSL…IIVE), 450–470 (SIFG…LTGV), 483–503 (IIAL…AVAI), 537–557 (VVIS…FHLG), 878–898 (LQIV…ISFG), 903–923 (ALLV…ALWL), 934–954 (VGFI…ITFI), 979–999 (PVLM…LATG), and 1011–1031 (VVIG…PGLY).

The protein belongs to the resistance-nodulation-cell division (RND) (TC 2.A.6) family.

It localises to the cell inner membrane. Presumed to function with HelC and HelB in efflux of an unidentified substrate. This Legionella pneumophila protein is Protein HelA (helA).